The sequence spans 305 residues: GMP synthase [glutamine-hydrolyzing] subunit B (305 aa).

The 183-residue stretch at 2–184 folds into the GMPS ATP-PPase domain; sequence VNIEKFIDQA…LGLPAEIQHR (183 aa). Residue 29-35 coordinates ATP; that stretch reads SGGVDSS.

Heterodimer composed of a glutamine amidotransferase subunit (A) and a GMP-binding subunit (B).

The catalysed reaction is XMP + L-glutamine + ATP + H2O = GMP + L-glutamate + AMP + diphosphate + 2 H(+). It participates in purine metabolism; GMP biosynthesis; GMP from XMP (L-Gln route): step 1/1. Functionally, catalyzes the synthesis of GMP from XMP. In Methanoculleus marisnigri (strain ATCC 35101 / DSM 1498 / JR1), this protein is GMP synthase [glutamine-hydrolyzing] subunit B.